The sequence spans 1262 residues: Clustered mitochondria protein homolog (1262 aa).

Positions 1–47 (MTSGSELKAEVDAPVVNGKDELVHEEDNNDSGHSSINTPDASEDKQT) are disordered. Residues 31-40 (SGHSSINTPD) show a composition bias toward polar residues. The 246-residue stretch at 335 to 580 (AIELIEPFRV…RSMPPDVHYL (246 aa)) folds into the Clu domain.

This sequence belongs to the CLU family.

The protein resides in the cytoplasm. Its function is as follows. mRNA-binding protein involved in proper cytoplasmic distribution of mitochondria. The protein is Clustered mitochondria protein homolog of Caenorhabditis briggsae.